Reading from the N-terminus, the 186-residue chain is Lipid A palmitoyltransferase PagP (186 aa).

Positions 1-25 are cleaved as a signal peptide; sequence MKVSKYVAIFFFVFIQLISVGKVFA. Active-site residues include His-58, Asp-101, and Ser-102.

Belongs to the lipid A palmitoyltransferase family. In terms of assembly, homodimer.

The protein localises to the cell outer membrane. The catalysed reaction is lipid A (E. coli) + a 1-hexadecanoyl-2-acyl-sn-glycero-3-phosphocholine = hepta-acyl lipid A (E. coli) + a 2-acyl-sn-glycero-3-phosphocholine. It catalyses the reaction lipid IIA + a 1-hexadecanoyl-2-acyl-sn-glycero-3-phosphocholine = lipid IIB + a 2-acyl-sn-glycero-3-phosphocholine. It carries out the reaction lipid IVA (E. coli) + a 1-hexadecanoyl-2-acyl-sn-glycero-3-phosphocholine = lipid IVB (E. coli) + a 2-acyl-sn-glycero-3-phosphocholine. Transfers a palmitate residue from the sn-1 position of a phospholipid to the N-linked hydroxymyristate on the proximal unit of lipid A or its precursors. The sequence is that of Lipid A palmitoyltransferase PagP from Escherichia coli O6:K15:H31 (strain 536 / UPEC).